A 205-amino-acid polypeptide reads, in one-letter code: Methylthioribulose-1-phosphate dehydratase (205 aa).

Zn(2+) is bound by residues His-96 and His-98.

The protein belongs to the aldolase class II family. MtnB subfamily. Requires Zn(2+) as cofactor.

The enzyme catalyses 5-(methylsulfanyl)-D-ribulose 1-phosphate = 5-methylsulfanyl-2,3-dioxopentyl phosphate + H2O. It functions in the pathway amino-acid biosynthesis; L-methionine biosynthesis via salvage pathway; L-methionine from S-methyl-5-thio-alpha-D-ribose 1-phosphate: step 2/6. In terms of biological role, catalyzes the dehydration of methylthioribulose-1-phosphate (MTRu-1-P) into 2,3-diketo-5-methylthiopentyl-1-phosphate (DK-MTP-1-P). In Pseudomonas paraeruginosa (strain DSM 24068 / PA7) (Pseudomonas aeruginosa (strain PA7)), this protein is Methylthioribulose-1-phosphate dehydratase.